We begin with the raw amino-acid sequence, 413 residues long: Phosphopentomutase (413 aa).

Mn(2+) is bound by residues Asp-11, Asp-306, His-311, Asp-347, His-348, and His-359.

The protein belongs to the phosphopentomutase family. It depends on Mn(2+) as a cofactor.

The protein localises to the cytoplasm. The enzyme catalyses 2-deoxy-alpha-D-ribose 1-phosphate = 2-deoxy-D-ribose 5-phosphate. The catalysed reaction is alpha-D-ribose 1-phosphate = D-ribose 5-phosphate. It functions in the pathway carbohydrate degradation; 2-deoxy-D-ribose 1-phosphate degradation; D-glyceraldehyde 3-phosphate and acetaldehyde from 2-deoxy-alpha-D-ribose 1-phosphate: step 1/2. Functionally, isomerase that catalyzes the conversion of deoxy-ribose 1-phosphate (dRib-1-P) and ribose 1-phosphate (Rib-1-P) to deoxy-ribose 5-phosphate (dRib-5-P) and ribose 5-phosphate (Rib-5-P), respectively. This is Phosphopentomutase from Helicobacter pylori (strain ATCC 700392 / 26695) (Campylobacter pylori).